The sequence spans 129 residues: uncharacterized protein (129 aa).

This is an uncharacterized protein from Mycoplasma genitalium (strain ATCC 33530 / DSM 19775 / NCTC 10195 / G37) (Mycoplasmoides genitalium).